A 301-amino-acid polypeptide reads, in one-letter code: Aspartate carbamoyltransferase catalytic subunit (301 aa).

The carbamoyl phosphate site is built by Arg-54 and Thr-55. Lys-82 is a binding site for L-aspartate. Residues Arg-104, His-132, and Gln-135 each contribute to the carbamoyl phosphate site. L-aspartate-binding residues include Arg-165 and Arg-217. The carbamoyl phosphate site is built by Gly-257 and Pro-258.

It belongs to the aspartate/ornithine carbamoyltransferase superfamily. ATCase family. As to quaternary structure, heterododecamer (2C3:3R2) of six catalytic PyrB chains organized as two trimers (C3), and six regulatory PyrI chains organized as three dimers (R2).

The enzyme catalyses carbamoyl phosphate + L-aspartate = N-carbamoyl-L-aspartate + phosphate + H(+). It participates in pyrimidine metabolism; UMP biosynthesis via de novo pathway; (S)-dihydroorotate from bicarbonate: step 2/3. Functionally, catalyzes the condensation of carbamoyl phosphate and aspartate to form carbamoyl aspartate and inorganic phosphate, the committed step in the de novo pyrimidine nucleotide biosynthesis pathway. The protein is Aspartate carbamoyltransferase catalytic subunit of Thermus aquaticus.